A 93-amino-acid chain; its full sequence is Large ribosomal subunit protein eL42 (93 aa).

4 residues coordinate Zn(2+): C11, C14, C72, and C75. The C4-type zinc-finger motif lies at 11–75 (CPHCHSHFEH…TDLKYRCSEC (65 aa)).

The protein belongs to the eukaryotic ribosomal protein eL42 family. Part of the 50S ribosomal subunit. Zn(2+) serves as cofactor.

Functionally, binds to the 23S rRNA. The sequence is that of Large ribosomal subunit protein eL42 (rpl44e) from Natronomonas pharaonis (strain ATCC 35678 / DSM 2160 / CIP 103997 / JCM 8858 / NBRC 14720 / NCIMB 2260 / Gabara) (Halobacterium pharaonis).